The primary structure comprises 715 residues: ATP-dependent DNA helicase Hel308 (715 aa).

Residues 1–29 (MKVEELRIDERIKEVLKKRGISELYPPQA) carry the Q motif motif. Residues Q28 and 46-53 (IPTASGKT) each bind ATP. Residues 33–197 (TSGILKGENA…WLNAKLIKSD (165 aa)) enclose the Helicase ATP-binding domain. Positions 145-148 (DEIH) match the DEAH box motif. Residues 229 to 422 (LVYDAIKRSK…ILRGQILALI (194 aa)) form the Helicase C-terminal domain.

This sequence belongs to the helicase family. Hel308 subfamily. As to quaternary structure, monomer.

The catalysed reaction is Couples ATP hydrolysis with the unwinding of duplex DNA by translocating in the 3'-5' direction.. The enzyme catalyses ATP + H2O = ADP + phosphate + H(+). Functionally, DNA-dependent ATPase and 3'-5' DNA helicase that may be involved in repair of stalled replication forks. The polypeptide is ATP-dependent DNA helicase Hel308 (Pyrococcus horikoshii (strain ATCC 700860 / DSM 12428 / JCM 9974 / NBRC 100139 / OT-3)).